We begin with the raw amino-acid sequence, 403 residues long: Calcium-responsive transactivator (403 aa).

The N-terminal auto-inhibitory domain stretch occupies residues 1–148 (MSVAFASARP…TLPTTTMSMA (148 aa)). The short motif at 50-53 (YQQI) is the SH2-binding element. Disordered stretches follow at residues 72–111 (QSLL…ALGS), 152–171 (HGSA…VPMQ), 224–303 (NQSS…RTFE), and 318–403 (SQQQ…NYQQ). Polar residues-rich tracts occupy residues 92–105 (QTGP…QGNL) and 161–171 (TVPSSQNVPMQ). The tract at residues 149-238 (VSTHGSAPGY…GSSMMGQRPL (90 aa)) is methionine-rich intra-molecular domain. Positions 224–235 (NQSSQGSSMMGQ) are enriched in low complexity. The segment at 252–324 (YLGQEEYYSE…AQYSQQQTGY (73 aa)) is MFD domain. Residues 263-277 (YGHSQGSSEAMTPQY) show a composition bias toward polar residues. Positions 286-296 (YSYQQSSYGEQ) are enriched in low complexity. Positions 341–403 (NQQNYPGQQQ…EQGQYGNYQQ (63 aa)) are necessary for nuclear localization. The short motif at 360–363 (SQYS) is the SH2-binding element. An SH3-binding motif is present at residues 378 to 386 (TSQTTSTAQ). An SH2-binding motif is present at residues 398 to 401 (YGNY).

Belongs to the SS18 family. Homodimer.

Its subcellular location is the nucleus. Functionally, transcriptional activator which may be required for calcium-dependent dendritic growth and branching in cortical neurons. This Xenopus laevis (African clawed frog) protein is Calcium-responsive transactivator (ss18l1).